Here is a 127-residue protein sequence, read N- to C-terminus: Small ribosomal subunit protein uS13 (127 aa).

The segment at 99-127 (RGQRTRTNARTRRGRRGQAIGIKKKTLKK) is disordered.

Belongs to the universal ribosomal protein uS13 family. Part of the 30S ribosomal subunit. Forms a loose heterodimer with protein S19. Forms two bridges to the 50S subunit in the 70S ribosome.

Its function is as follows. Located at the top of the head of the 30S subunit, it contacts several helices of the 16S rRNA. In the 70S ribosome it contacts the 23S rRNA (bridge B1a) and protein L5 of the 50S subunit (bridge B1b), connecting the 2 subunits; these bridges are implicated in subunit movement. Contacts the tRNAs in the A and P-sites. The polypeptide is Small ribosomal subunit protein uS13 (Roseiflexus castenholzii (strain DSM 13941 / HLO8)).